Here is a 333-residue protein sequence, read N- to C-terminus: Fructose-1,6-bisphosphatase class 1 (333 aa).

Residues glutamate 92, aspartate 113, leucine 115, and aspartate 116 each coordinate Mg(2+). Substrate is bound by residues 116–119, asparagine 209, tyrosine 242, and lysine 272; that span reads DGSS. Residue glutamate 278 participates in Mg(2+) binding.

The protein belongs to the FBPase class 1 family. As to quaternary structure, homotetramer. Mg(2+) is required as a cofactor.

The protein resides in the cytoplasm. The catalysed reaction is beta-D-fructose 1,6-bisphosphate + H2O = beta-D-fructose 6-phosphate + phosphate. Its pathway is carbohydrate biosynthesis; Calvin cycle. The sequence is that of Fructose-1,6-bisphosphatase class 1 from Chlorobium phaeobacteroides (strain BS1).